The sequence spans 148 residues: Large ribosomal subunit protein bL9 (148 aa).

The protein belongs to the bacterial ribosomal protein bL9 family.

Binds to the 23S rRNA. The protein is Large ribosomal subunit protein bL9 of Oceanobacillus iheyensis (strain DSM 14371 / CIP 107618 / JCM 11309 / KCTC 3954 / HTE831).